A 240-amino-acid chain; its full sequence is 1-(5-phosphoribosyl)-5-[(5-phosphoribosylamino)methylideneamino] imidazole-4-carboxamide isomerase (240 aa).

Catalysis depends on aspartate 8, which acts as the Proton acceptor. The active-site Proton donor is aspartate 129.

It belongs to the HisA/HisF family.

It is found in the cytoplasm. It carries out the reaction 1-(5-phospho-beta-D-ribosyl)-5-[(5-phospho-beta-D-ribosylamino)methylideneamino]imidazole-4-carboxamide = 5-[(5-phospho-1-deoxy-D-ribulos-1-ylimino)methylamino]-1-(5-phospho-beta-D-ribosyl)imidazole-4-carboxamide. Its pathway is amino-acid biosynthesis; L-histidine biosynthesis; L-histidine from 5-phospho-alpha-D-ribose 1-diphosphate: step 4/9. In Clostridioides difficile (strain 630) (Peptoclostridium difficile), this protein is 1-(5-phosphoribosyl)-5-[(5-phosphoribosylamino)methylideneamino] imidazole-4-carboxamide isomerase.